The chain runs to 131 residues: Small ribosomal subunit protein uS11 (131 aa).

Belongs to the universal ribosomal protein uS11 family. In terms of assembly, part of the 30S ribosomal subunit. Interacts with proteins S7 and S18. Binds to IF-3.

Functionally, located on the platform of the 30S subunit, it bridges several disparate RNA helices of the 16S rRNA. Forms part of the Shine-Dalgarno cleft in the 70S ribosome. The sequence is that of Small ribosomal subunit protein uS11 from Bacillus pumilus (strain SAFR-032).